A 498-amino-acid chain; its full sequence is Capsanthin/capsorubin synthase, chromoplastic (498 aa).

The transit peptide at 1-52 directs the protein to the chromoplast; sequence METLLKPFPSPLLSIPTPNMYSFKHNSTFPNPTKQKDSRKFHYRNKSSTHFC. NAD(+) is bound at residue 84–112; it reads VIIIGTGPAGLRLAEQVSKYGIKVCCVDP. Residues 293-297 carry the FLEET motif motif; sequence FLEET.

The protein belongs to the lycopene cyclase family. Monomer. The cofactor is FAD. NADPH is required as a cofactor.

The protein resides in the plastid. Its subcellular location is the chromoplast. It catalyses the reaction all-trans-violaxanthin = all-trans-capsorubin. It carries out the reaction all-trans-antheraxanthin = all-trans-capsanthin. The catalysed reaction is all-trans-violaxanthin = (5R,6S)-5,6-epoxi-capsanthin. The enzyme catalyses (5R,6S)-5,6-epoxi-capsanthin = all-trans-capsorubin. Its pathway is carotenoid biosynthesis; capsanthin biosynthesis; capsanthin from antheraxanthin: step 1/1. The protein operates within carotenoid biosynthesis; capsorubin biosynthesis; capsorubin from violaxanthin: step 1/1. Catalyzes the conversion of the ubiquitous 5,6-epoxycarotenoids, antheraxanthin and violaxanthin, into capsanthin and capsorubin, respectively. The chain is Capsanthin/capsorubin synthase, chromoplastic from Capsicum annuum (Capsicum pepper).